A 338-amino-acid chain; its full sequence is MNLQKFPRHALTFGPTPIHPLKRLSAHLGGKVELYAKREDCNSGLAFGGNKTRKLEYLIPEAIEGGYDTLVSIGGIQSNQTRQVAAVAAHLGMKCVLVQENWVNYSDAVYDRVGNIEMSRIMGADVRLDAAGFDIGIRPSWEQAMEDVRRAGGKPFPIPAGCSEHPRGGLGFVAFAEEVRQQEEELGFQFDYIVVCSVTGSTQAGMVVGFAADGRADRVIGIDASAKPEQTREQILRIARNTAELVELGREITDADVVLDTRYGGPEYGLPNEGTLEAIRLCARQEGMLTDPVYEGKSMHGMIDMVRNGEFPAGSRVLYAHLGGVPALNAYSFLFRNG.

Lys51 carries the N6-(pyridoxal phosphate)lysine modification. Residue Ser78 is the Nucleophile of the active site.

This sequence belongs to the ACC deaminase/D-cysteine desulfhydrase family. In terms of assembly, homotrimer. It depends on pyridoxal 5'-phosphate as a cofactor.

It catalyses the reaction 1-aminocyclopropane-1-carboxylate + H2O = 2-oxobutanoate + NH4(+). In terms of biological role, catalyzes a cyclopropane ring-opening reaction, the irreversible conversion of 1-aminocyclopropane-1-carboxylate (ACC) to ammonia and alpha-ketobutyrate. Allows growth on ACC as a nitrogen source. The chain is 1-aminocyclopropane-1-carboxylate deaminase from Paracidovorax citrulli (strain AAC00-1) (Acidovorax citrulli).